Consider the following 247-residue polypeptide: 2,3-bisphosphoglycerate-dependent phosphoglycerate mutase (247 aa).

Residues 8 to 15 (RHGESTWN), 21 to 22 (TG), Arg60, 87 to 90 (ERHY), Lys98, 114 to 115 (RR), and 183 to 184 (GN) each bind substrate. Residue His9 is the Tele-phosphohistidine intermediate of the active site. The active-site Proton donor/acceptor is Glu87.

This sequence belongs to the phosphoglycerate mutase family. BPG-dependent PGAM subfamily. As to quaternary structure, homodimer.

It catalyses the reaction (2R)-2-phosphoglycerate = (2R)-3-phosphoglycerate. The protein operates within carbohydrate degradation; glycolysis; pyruvate from D-glyceraldehyde 3-phosphate: step 3/5. Catalyzes the interconversion of 2-phosphoglycerate and 3-phosphoglycerate. The protein is 2,3-bisphosphoglycerate-dependent phosphoglycerate mutase of Acidovorax ebreus (strain TPSY) (Diaphorobacter sp. (strain TPSY)).